We begin with the raw amino-acid sequence, 588 residues long: Dual specificity tyrosine-phosphorylation-regulated kinase 3 (588 aa).

Residues 1-188 (MGGTARGPGR…HGVIGGPNNG (188 aa)) are disordered. A compositionally biased stretch (polar residues) spans 97 to 134 (SNTIQSDGISDSEKCSPTVSQGKSSDCLNTVKSNSSSK). The 314-residue stretch at 209-522 (YEVLKIIGKG…PAQALRHPWI (314 aa)) folds into the Protein kinase domain. ATP-binding positions include 215–223 (IGKGSFGQV), Lys-238, and 288–291 (FELL). Asp-335 (proton acceptor) is an active-site residue. Ser-350 is modified (phosphoserine). Tyr-369 carries the phosphotyrosine modification. The Nuclear localization signal motif lies at 468–481 (RSRRGKKRGPPGSK).

This sequence belongs to the protein kinase superfamily. CMGC Ser/Thr protein kinase family. MNB/DYRK subfamily. In terms of assembly, interacts with SIRT1. The cofactor is Mg(2+). In terms of processing, ubiquitinated at anaphase by the anaphase-promoting complex (APC/C), leading to its degradation by the proteasome. Protein kinase activity is activated following autophosphorylation at Tyr-369. Autophosphorylation at Ser-350 stabilizes the protein and enhances the protein kinase activity. In terms of tissue distribution, isoform 1: Highly expressed in testis and in hematopoietic tissue such as fetal liver, and bone marrow. Isoform 1: Predominant form in fetal liver and bone marrow. Isoform 1: Present at low levels in heart, pancreas, lymph node and thymus. Isoform 2: Highly expressed in testis and in hematopoietic tissue such as fetal liver, and bone marrow. Isoform 2: Predominant form in testis. Isoform 2: Present at low levels in heart, pancreas, lymph node and thymus.

The protein localises to the nucleus. Its subcellular location is the cytoplasm. The protein resides in the nucleus speckle. It is found in the cytoplasmic granule. It localises to the cytoskeleton. The protein localises to the microtubule organizing center. Its subcellular location is the centrosome. The enzyme catalyses L-seryl-[protein] + ATP = O-phospho-L-seryl-[protein] + ADP + H(+). The catalysed reaction is L-threonyl-[protein] + ATP = O-phospho-L-threonyl-[protein] + ADP + H(+). It carries out the reaction L-tyrosyl-[protein] + ATP = O-phospho-L-tyrosyl-[protein] + ADP + H(+). Its activity is regulated as follows. Protein kinase activity is activated following autophosphorylation at Tyr-369. Inhibited by harmine, an ATP competitive inhibitor. Inhibited by small-compound GSK-626616. Functionally, dual-specificity protein kinase that promotes disassembly of several types of membraneless organelles during mitosis, such as stress granules, nuclear speckles and pericentriolar material. Dual-specificity tyrosine-regulated kinases (DYRKs) autophosphorylate a critical tyrosine residue in their activation loop and phosphorylate their substrate on serine and threonine residues. Acts as a central dissolvase of membraneless organelles during the G2-to-M transition, after the nuclear-envelope breakdown: acts by mediating phosphorylation of multiple serine and threonine residues in unstructured domains of proteins, such as SRRM1 and PCM1. Does not mediate disassembly of all membraneless organelles: disassembly of P-body and nucleolus is not regulated by DYRK3. Dissolution of membraneless organelles at the onset of mitosis is also required to release mitotic regulators, such as ZNF207, from liquid-unmixed organelles where they are sequestered and keep them dissolved during mitosis. Regulates mTORC1 by mediating the dissolution of stress granules: during stressful conditions, DYRK3 partitions from the cytosol to the stress granule, together with mTORC1 components, which prevents mTORC1 signaling. When stress signals are gone, the kinase activity of DYRK3 is required for the dissolution of stress granule and mTORC1 relocation to the cytosol: acts by mediating the phosphorylation of the mTORC1 inhibitor AKT1S1, allowing full reactivation of mTORC1 signaling. Also acts as a negative regulator of EPO-dependent erythropoiesis: may place an upper limit on red cell production during stress erythropoiesis. Inhibits cell death due to cytokine withdrawal in hematopoietic progenitor cells. Promotes cell survival upon genotoxic stress through phosphorylation of SIRT1: this in turn inhibits p53/TP53 activity and apoptosis. The protein is Dual specificity tyrosine-phosphorylation-regulated kinase 3 of Homo sapiens (Human).